A 205-amino-acid polypeptide reads, in one-letter code: Thymidylate kinase (205 aa).

11–18 (GLDKSGKT) contacts ATP.

The protein belongs to the thymidylate kinase family. In terms of assembly, homodimer; the dimer arrangement is orthogonal and not antiparallel as in human enzyme.

The enzyme catalyses dTMP + ATP = dTDP + ADP. It functions in the pathway pyrimidine metabolism; dTTP biosynthesis. Poxvirus TMP kinase is able to phosphorylate dTMP, dUMP and also dGMP from any purine and pyrimidine nucleoside triphosphate. The large substrate specificity is explained by the presence of a canal connecting the edge of the dimer interface to the TMP base binding pocket, canal not found in the human homolog. This is Thymidylate kinase (OPG178) from Homo sapiens (Human).